The sequence spans 116 residues: NADH-ubiquinone oxidoreductase chain 3 (116 aa).

The next 3 helical transmembrane spans lie at 6–26 (FMLLLSLTLSIILTTINFWLA), 56–76 (FFLVAILFLLFDLEIALLLPL), and 85–105 (PLLTLLWTSILLLLLTLGLVY).

It belongs to the complex I subunit 3 family.

Its subcellular location is the mitochondrion membrane. The enzyme catalyses a ubiquinone + NADH + 5 H(+)(in) = a ubiquinol + NAD(+) + 4 H(+)(out). In terms of biological role, core subunit of the mitochondrial membrane respiratory chain NADH dehydrogenase (Complex I) that is believed to belong to the minimal assembly required for catalysis. Complex I functions in the transfer of electrons from NADH to the respiratory chain. The immediate electron acceptor for the enzyme is believed to be ubiquinone. This chain is NADH-ubiquinone oxidoreductase chain 3 (MT-ND3), found in Struthio camelus (Common ostrich).